The chain runs to 77 residues: Large ribosomal subunit protein eL20 (77 aa).

This sequence belongs to the eukaryotic ribosomal protein eL20 family. As to quaternary structure, part of the 50S ribosomal subunit. Binds 23S rRNA.

This Thermococcus onnurineus (strain NA1) protein is Large ribosomal subunit protein eL20.